The sequence spans 461 residues: tRNA (guanine(10)-N(2))-methyltransferase TRMT11 (461 aa).

Belongs to the class I-like SAM-binding methyltransferase superfamily. TRM11 methyltransferase family. Part of the heterodimeric TRMT11-TRM112 methyltransferase complex; this complex forms an active tRNA methyltransferase, where TRMT112 acts as an activator of the catalytic subunit TRMT11.

It localises to the cytoplasm. The catalysed reaction is guanosine(10) in tRNA + S-adenosyl-L-methionine = N(2)-methylguanosine(10) in tRNA + S-adenosyl-L-homocysteine + H(+). Functionally, catalytic subunit of the TRMT11-TRM112 methyltransferase complex, that specifically mediates the S-adenosyl-L-methionine-dependent N(2)-methylation of guanosine nucleotide at position 10 (m2G10) in tRNAs. This is one of the major tRNA (guanine-N(2))-methyltransferases. The sequence is that of tRNA (guanine(10)-N(2))-methyltransferase TRMT11 from Gallus gallus (Chicken).